The sequence spans 310 residues: tRNA-cytidine(32) 2-sulfurtransferase (310 aa).

The PP-loop motif signature appears at 45 to 50 (SGGKDS). The [4Fe-4S] cluster site is built by Cys120, Cys123, and Cys211.

The protein belongs to the TtcA family. As to quaternary structure, homodimer. Mg(2+) serves as cofactor. It depends on [4Fe-4S] cluster as a cofactor.

It is found in the cytoplasm. The enzyme catalyses cytidine(32) in tRNA + S-sulfanyl-L-cysteinyl-[cysteine desulfurase] + AH2 + ATP = 2-thiocytidine(32) in tRNA + L-cysteinyl-[cysteine desulfurase] + A + AMP + diphosphate + H(+). It participates in tRNA modification. Catalyzes the ATP-dependent 2-thiolation of cytidine in position 32 of tRNA, to form 2-thiocytidine (s(2)C32). The sulfur atoms are provided by the cysteine/cysteine desulfurase (IscS) system. The polypeptide is tRNA-cytidine(32) 2-sulfurtransferase (Shewanella baltica (strain OS155 / ATCC BAA-1091)).